Here is an 811-residue protein sequence, read N- to C-terminus: Hypoxia-inducible factor 1-alpha (811 aa).

The segment at 1-27 (MDSPGGVTDKKRISSERRKEKSRDAAR) is disordered. A compositionally biased stretch (basic and acidic residues) spans 8–27 (TDKKRISSERRKEKSRDAAR). Positions 17–70 (RRKEKSRDAARCRRSKESEVFYELAHQLPLPHTVSAHLDKASIMRLTISYLRMR) constitute a bHLH domain. PAS domains are found at residues 80–157 (TEAN…PVKK) and 228–298 (PHPS…FTKG). The PAC domain maps to 302 to 345 (TGQYRMLAKQGGYVWVETQATVIYNTKNSQPQCIVCVNYVLSGI). Positions 401-587 (APAAGDTIIS…LSPLESSSSG (187 aa)) are ODD. The residue at position 402 (P402) is a 4-hydroxyproline. Positions 490–518 (PQVQEQPTSPSDASTSQSSPEPSSPNDYC) are disordered. Residues 496–514 (PTSPSDASTSQSSPEPSSP) are compositionally biased toward low complexity. Residues 529 to 573 (FKLELVEKLFAIDTEAKNPFSTQETDLDLEMLAPYIPMDDDFQLR) are NTAD. At P562 the chain carries 4-hydroxyproline. Residues 576 to 785 (DQLSPLESSS…GLPQLTSYDC (210 aa)) are ID. Residues 634 to 652 (NDTSSAPASPYSGNRSRTA) show a composition bias toward polar residues. The tract at residues 634-655 (NDTSSAPASPYSGNRSRTASPI) is disordered. 2 short sequence motifs (nuclear localization signal) span residues 703–706 (RKRK) and 718–721 (GIGS). The segment at 771 to 811 (SMDESGLPQLTSYDCEVNAPIQGNRNLLQGEELLRALDQVN) is CTAD. At N788 the chain carries (3S)-3-hydroxyasparagine.

As to quaternary structure, efficient DNA binding requires heterodimerization of an alpha and a beta/ARNT subunit. Post-translationally, in normoxia, is hydroxylated on Pro-402 and Pro-562. The hydroxylated prolines promote interaction with VHL, initiating rapid ubiquitination and subsequent proteasomal degradation. Under hypoxia, proline hydroxylation is impaired and ubiquitination is attenuated, resulting in stabilization. In normoxia, is hydroxylated on Asn-788, thus abrogating interaction with CREBBP and EP300 and preventing transcriptional activation. In terms of processing, the iron and 2-oxoglutarate dependent 3-hydroxylation of asparagine is (S) stereospecific within HIF CTAD domains.

It localises to the cytoplasm. The protein localises to the nucleus. Its subcellular location is the nucleus speckle. With respect to regulation, induced by reactive oxygen species (ROS). Its function is as follows. Functions as a master transcriptional regulator of the adaptive response to hypoxia. Under hypoxic conditions, activates the transcription of over 40 genes, including erythropoietin, glucose transporters, glycolytic enzymes, vascular endothelial growth factor, HILPDA, and other genes whose protein products increase oxygen delivery or facilitate metabolic adaptation to hypoxia. Plays an essential role in embryonic vascularization, tumor angiogenesis and pathophysiology of ischemic disease. The protein is Hypoxia-inducible factor 1-alpha (HIF1A) of Gallus gallus (Chicken).